A 388-amino-acid chain; its full sequence is Salivary protein Tsal2A (388 aa).

The signal sequence occupies residues 1-18 (MSLLYGLLILAFTRSCLV). The N-linked (GlcNAc...) asparagine glycan is linked to N260.

This sequence belongs to the DNA/RNA non-specific endonuclease family. A divalent metal cation serves as cofactor. Saliva (at protein level).

The protein resides in the secreted. Functionally, binds double-stranded DNA (dsDNA) with high affinity. Binds double-stranded RNA. Binds single-stranded DNA with lower affinity and with a preference for purine-rich sequences. Shows residual nuclease activity for dsDNA. Facilitates blood meal intake by lowering the local viscosity created by the release of host DNA. This Glossina morsitans morsitans (Savannah tsetse fly) protein is Salivary protein Tsal2A.